The primary structure comprises 269 residues: HTH-type transcriptional activator ArnR1 (269 aa).

The Cytoplasmic portion of the chain corresponds to 1 to 217; it reads MSSMNKRVFD…LLKLTGSYRY (217 aa). Residues 42–65 constitute a DNA-binding region (H-T-H motif); the sequence is TTEISQTINTSRKSIIDAIRKLVD. The chain crosses the membrane as a helical span at residues 218–238; sequence EIALTKVMLFNVISIPVLMYL. The Extracellular segment spans residues 239 to 241; the sequence is KDQ. Residues 242 to 262 form a helical membrane-spanning segment; the sequence is LGILEAIWLYVIILLPLLSIF. At 263–269 the chain is on the cytoplasmic side; it reads AEIFNRI.

Its subcellular location is the cell membrane. In terms of biological role, involved in regulation of archaellar gene expression. May activate flaB transcription upon nutrient starvation by acting on the flaB promoter. The protein is HTH-type transcriptional activator ArnR1 of Sulfolobus acidocaldarius (strain ATCC 33909 / DSM 639 / JCM 8929 / NBRC 15157 / NCIMB 11770).